A 109-amino-acid chain; its full sequence is uncharacterized protein (109 aa).

A disordered region spans residues 1–25 (METKPNALTGTSLSSTSGQTTQKSI). The segment covering 8–22 (LTGTSLSSTSGQTTQ) has biased composition (low complexity). The chain crosses the membrane as a helical span at residues 42–62 (TFGLMAILNLALLLWTLLATL). The disordered stretch occupies residues 84-109 (TTLQKNTPSAKNGLKNTTNKHSHEDM). Residues 91–102 (PSAKNGLKNTTN) show a composition bias toward polar residues.

The protein resides in the host membrane. This is an uncharacterized protein from Bdellovibrio phage phiMH2K (Bacteriophage phiMH2K).